Here is a 368-residue protein sequence, read N- to C-terminus: 3-dehydroquinate synthase (368 aa).

NAD(+)-binding positions include 71 to 76, 105 to 109, 129 to 130, Lys-142, Lys-151, and 169 to 172; these read DGEAFK, GVVGD, TT, and TLRT. Residues Glu-184, His-247, and His-264 each coordinate Zn(2+).

The protein belongs to the sugar phosphate cyclases superfamily. Dehydroquinate synthase family. Requires Co(2+) as cofactor. It depends on Zn(2+) as a cofactor. The cofactor is NAD(+).

The protein resides in the cytoplasm. The catalysed reaction is 7-phospho-2-dehydro-3-deoxy-D-arabino-heptonate = 3-dehydroquinate + phosphate. It participates in metabolic intermediate biosynthesis; chorismate biosynthesis; chorismate from D-erythrose 4-phosphate and phosphoenolpyruvate: step 2/7. Functionally, catalyzes the conversion of 3-deoxy-D-arabino-heptulosonate 7-phosphate (DAHP) to dehydroquinate (DHQ). This is 3-dehydroquinate synthase from Cupriavidus taiwanensis (strain DSM 17343 / BCRC 17206 / CCUG 44338 / CIP 107171 / LMG 19424 / R1) (Ralstonia taiwanensis (strain LMG 19424)).